The sequence spans 395 residues: Phosphoglycerate kinase (395 aa).

Residues 21 to 23 (DLN), R36, 59 to 62 (HLGR), R113, and R146 each bind substrate. ATP contacts are provided by residues K197, E324, and 350 to 353 (GGDT).

This sequence belongs to the phosphoglycerate kinase family. Monomer.

Its subcellular location is the cytoplasm. The enzyme catalyses (2R)-3-phosphoglycerate + ATP = (2R)-3-phospho-glyceroyl phosphate + ADP. It functions in the pathway carbohydrate degradation; glycolysis; pyruvate from D-glyceraldehyde 3-phosphate: step 2/5. The sequence is that of Phosphoglycerate kinase from Acinetobacter baylyi (strain ATCC 33305 / BD413 / ADP1).